We begin with the raw amino-acid sequence, 234 residues long: DNA repair protein RecO (234 aa).

It belongs to the RecO family.

Functionally, involved in DNA repair and RecF pathway recombination. The chain is DNA repair protein RecO from Halorhodospira halophila (strain DSM 244 / SL1) (Ectothiorhodospira halophila (strain DSM 244 / SL1)).